Consider the following 287-residue polypeptide: Probable ABC transporter extracellular-binding protein YckB (287 aa).

Positions Met-1–Ala-24 are cleaved as a signal peptide. Cys-25 carries the N-palmitoyl cysteine lipid modification. Cys-25 carries the S-diacylglycerol cysteine lipid modification.

Belongs to the bacterial solute-binding protein 3 family.

The protein localises to the cell membrane. Probably part of a binding-protein-dependent transport system. The protein is Probable ABC transporter extracellular-binding protein YckB (yckB) of Bacillus subtilis (strain 168).